Consider the following 482-residue polypeptide: tRNA sulfurtransferase (482 aa).

Residues valine 61–arginine 165 enclose the THUMP domain. Residues leucine 183–isoleucine 184, lysine 265, glycine 287, and glutamine 296 each bind ATP. A disulfide bond links cysteine 344 and cysteine 456. The Rhodanese domain occupies phenylalanine 404–proline 482. The Cysteine persulfide intermediate role is filled by cysteine 456.

This sequence belongs to the ThiI family.

It is found in the cytoplasm. The enzyme catalyses [ThiI sulfur-carrier protein]-S-sulfanyl-L-cysteine + a uridine in tRNA + 2 reduced [2Fe-2S]-[ferredoxin] + ATP + H(+) = [ThiI sulfur-carrier protein]-L-cysteine + a 4-thiouridine in tRNA + 2 oxidized [2Fe-2S]-[ferredoxin] + AMP + diphosphate. It catalyses the reaction [ThiS sulfur-carrier protein]-C-terminal Gly-Gly-AMP + S-sulfanyl-L-cysteinyl-[cysteine desulfurase] + AH2 = [ThiS sulfur-carrier protein]-C-terminal-Gly-aminoethanethioate + L-cysteinyl-[cysteine desulfurase] + A + AMP + 2 H(+). It participates in cofactor biosynthesis; thiamine diphosphate biosynthesis. Catalyzes the ATP-dependent transfer of a sulfur to tRNA to produce 4-thiouridine in position 8 of tRNAs, which functions as a near-UV photosensor. Also catalyzes the transfer of sulfur to the sulfur carrier protein ThiS, forming ThiS-thiocarboxylate. This is a step in the synthesis of thiazole, in the thiamine biosynthesis pathway. The sulfur is donated as persulfide by IscS. In Photorhabdus laumondii subsp. laumondii (strain DSM 15139 / CIP 105565 / TT01) (Photorhabdus luminescens subsp. laumondii), this protein is tRNA sulfurtransferase.